We begin with the raw amino-acid sequence, 384 residues long: V-type proton ATPase subunit C 2 (384 aa).

This sequence belongs to the V-ATPase C subunit family. In terms of assembly, V-ATPase is a heteromultimeric enzyme made up of two complexes: the ATP-hydrolytic V1 complex and the proton translocation V0 complex. The V1 complex consists of three catalytic AB heterodimers that form a heterohexamer, three peripheral stalks each consisting of EG heterodimers, one central rotor including subunits D and F, and the regulatory subunits C and H. The proton translocation complex V0 consists of the proton transport subunit a, a ring of proteolipid subunits c9c'', rotary subunit d, subunits e and f, and the accessory subunits vah-19/Ac45 and vah-20/PRR.

Subunit of the V1 complex of vacuolar(H+)-ATPase (V-ATPase), a multisubunit enzyme composed of a peripheral complex (V1) that hydrolyzes ATP and a membrane integral complex (V0) that translocates protons. V-ATPase is responsible for acidifying and maintaining the pH of intracellular compartments and in some cell types, is targeted to the plasma membrane, where it is responsible for acidifying the extracellular environment. Subunit C is necessary for the assembly of the catalytic sector of the enzyme and is likely to have a specific function in its catalytic activity. The polypeptide is V-type proton ATPase subunit C 2 (VATC) (Ascidia sydneiensis samea (Vanadium-rich ascidian)).